A 558-amino-acid chain; its full sequence is MPLGPWERVEAALTLLAIDPAGLKGLWLRARASALRDRITGALGALPLPVRRIHPTIGDDALFGGLDLAATLSAGTPVVQKGILDEPAVLVLAMAERTLPGLAARLGTALDAPRHCLIALDEGAERDELLPLGLVDRLALFLDLDGLPWGETREIALDPERLAAARARLAAVATPPEAAATLARVAAQLGIASLRAPTLALAAARAQAAWEGHAAVTDEDIRRAADLVFAHRAMPASEEAPPEPEPEPPEDQPDDSPPPPEQQQGEEMFPEEMLVEAVRAALPADLLEQLAAGRAARMARGATGTGSAKAGNRRGRPLPSRMGRLGTGARIDLVGTLRAAAPWQPLRRRQQKTDAVLLVRPSDIRIKRFRETSDRVLIFAVDASGSSAMARLSEAKGAVELLLGQAYARRDHVSLLAFRGRDAELILPPTRSLVQTKRRLAGLPGGGGTPLAHGLRLALAVGLQARARGMTPTVALLTDGRGNIALDGSANRAQAEEDALKLAASLRGSGLPAVVIDTANRPQPSLAALARALDAPYIALPRADAHKLSNVLGAAMGD.

2 disordered regions span residues 234 to 268 and 298 to 325; these read MPAS…GEEM and MARG…MGRL. The span at 240-254 shows a compositional bias: acidic residues; sequence APPEPEPEPPEDQPD. Positions 298-308 are enriched in low complexity; that stretch reads MARGATGTGSA. A VWFA domain is found at 376–555; sequence VLIFAVDASG…HKLSNVLGAA (180 aa).

The protein belongs to the Mg-chelatase subunits D/I family.

The enzyme catalyses protoporphyrin IX + Mg(2+) + ATP + H2O = Mg-protoporphyrin IX + ADP + phosphate + 3 H(+). It participates in porphyrin-containing compound metabolism; bacteriochlorophyll biosynthesis. In terms of biological role, involved in bacteriochlorophyll biosynthesis; introduces a magnesium ion into protoporphyrin IX to yield Mg-protoporphyrin IX. This Cereibacter sphaeroides (strain ATCC 17023 / DSM 158 / JCM 6121 / CCUG 31486 / LMG 2827 / NBRC 12203 / NCIMB 8253 / ATH 2.4.1.) (Rhodobacter sphaeroides) protein is Magnesium-chelatase 60 kDa subunit (bchD).